The primary structure comprises 283 residues: MAMIDPLENNLFDLPDYENTEDETFPPLPPPTSPGRGDAEWAQANGDPDGNQQSETKDSSSAARKAVKRSIPKLDANRLVSERGLPALRHMFDNVKFKGKGHEAEDLKTLLRHMEHWAHRLFPKLQFDDFIDRVESLGNKKEVQTCLKRIRLDLPILHEDFTANEGGGGESNGLDMATEEVHSFSGNVGELDSLPGTTLTEEQQQRIKRNRQLALERRQAKMQCNSQSQHDELSPSYPEEELNIPVARDLTGALEDTQVTATNVAVTETEDRERELQCASEKQ.

Residues 1-68 (MAMIDPLENN…SSSAARKAVK (68 aa)) form a disordered region. Over residues 15 to 24 (PDYENTEDET) the composition is skewed to acidic residues. The segment at 74 to 150 (LDANRLVSER…KEVQTCLKRI (77 aa)) is interaction with TIMELESS. Disordered regions lie at residues 186–205 (GNVG…EQQQ) and 217–238 (RRQA…PSYP).

The protein belongs to the CSM3 family. Interacts with TIMELESS, which impairs TIMELESS self-association.

It is found in the cytoplasm. It localises to the nucleus. Functionally, plays an important role in the control of DNA replication and the maintenance of replication fork stability. Important for cell survival after DNA damage or replication stress. May be required for the replication checkpoint induced by hydroxyurea or ultraviolet light. This chain is TIMELESS-interacting protein (TIPIN), found in Gallus gallus (Chicken).